The primary structure comprises 1402 residues: DNA-directed RNA polymerase subunit beta' (1402 aa).

The Zn(2+) site is built by Cys-71, Cys-73, Cys-86, and Cys-89. 3 residues coordinate Mg(2+): Asp-462, Asp-464, and Asp-466. The Zn(2+) site is built by Cys-808, Cys-881, Cys-888, and Cys-891.

It belongs to the RNA polymerase beta' chain family. In terms of assembly, the RNAP catalytic core consists of 2 alpha, 1 beta, 1 beta' and 1 omega subunit. When a sigma factor is associated with the core the holoenzyme is formed, which can initiate transcription. Requires Mg(2+) as cofactor. Zn(2+) serves as cofactor.

It catalyses the reaction RNA(n) + a ribonucleoside 5'-triphosphate = RNA(n+1) + diphosphate. In terms of biological role, DNA-dependent RNA polymerase catalyzes the transcription of DNA into RNA using the four ribonucleoside triphosphates as substrates. The chain is DNA-directed RNA polymerase subunit beta' from Hyphomonas neptunium (strain ATCC 15444).